A 372-amino-acid polypeptide reads, in one-letter code: Phospho-N-acetylmuramoyl-pentapeptide-transferase (372 aa).

Helical transmembrane passes span 2-22 (LVWL…VSSL), 71-91 (TPTM…LLWA), 98-118 (VWIL…DDWL), 134-154 (YFWL…IATL), 176-196 (MIPF…YFVI), 211-231 (GLAI…AYVS), 251-271 (VIIV…FNAH), 275-295 (VFMG…IAVM), 300-320 (IAFA…MLQV), and 349-369 (QVVA…LMTL).

Belongs to the glycosyltransferase 4 family. MraY subfamily. It depends on Mg(2+) as a cofactor.

The protein resides in the cell inner membrane. It catalyses the reaction UDP-N-acetyl-alpha-D-muramoyl-L-alanyl-gamma-D-glutamyl-meso-2,6-diaminopimeloyl-D-alanyl-D-alanine + di-trans,octa-cis-undecaprenyl phosphate = di-trans,octa-cis-undecaprenyl diphospho-N-acetyl-alpha-D-muramoyl-L-alanyl-D-glutamyl-meso-2,6-diaminopimeloyl-D-alanyl-D-alanine + UMP. The protein operates within cell wall biogenesis; peptidoglycan biosynthesis. Catalyzes the initial step of the lipid cycle reactions in the biosynthesis of the cell wall peptidoglycan: transfers peptidoglycan precursor phospho-MurNAc-pentapeptide from UDP-MurNAc-pentapeptide onto the lipid carrier undecaprenyl phosphate, yielding undecaprenyl-pyrophosphoryl-MurNAc-pentapeptide, known as lipid I. This chain is Phospho-N-acetylmuramoyl-pentapeptide-transferase, found in Psychrobacter cryohalolentis (strain ATCC BAA-1226 / DSM 17306 / VKM B-2378 / K5).